The primary structure comprises 657 residues: Pentatricopeptide repeat-containing protein At2g37310 (657 aa).

PPR repeat units lie at residues 21-55 (DGGA…SIKP), 56-86 (DNFL…ITVR), 87-121 (NAFS…SCYS), 128-165 (DSIS…GFDS), 166-196 (DVFV…MSER), 197-232 (DVVS…DFKP), 233-267 (NGVT…HIQM), 268-298 (DLSL…MSEK), 299-333 (DSVT…GLST), 334-364 (WNAM…GSRP), 365-399 (NTVT…GADN), 400-430 (NIYV…CKDR), 431-465 (SLIA…GTKP), 466-501 (DDVT…DIEP), and 502-536 (GVEH…PIAK). A type E motif region spans residues 537-612 (VWGALLNGAS…IPGTSWIETE (76 aa)). Residues 613–643 (KGLRSFIAKDSSCERSKEMYEIIEGLVESMS) are type E(+) motif.

Belongs to the PPR family. PCMP-E subfamily.

The polypeptide is Pentatricopeptide repeat-containing protein At2g37310 (PCMP-E49) (Arabidopsis thaliana (Mouse-ear cress)).